Reading from the N-terminus, the 265-residue chain is Capsule polysaccharide export inner-membrane protein CtrC (265 aa).

Helical transmembrane passes span 37–57 (IGFL…VLMW), 67–84 (TLNI…LMMW), 121–141 (IAGA…IGWI), 148–168 (FYML…GLVI), 178–198 (FGKI…AFFF), and 238–258 (WYIV…VSKF). In terms of domain architecture, ABC transmembrane type-2 spans 37-258 (IGFLWLFVEP…LFGLAMVSKF (222 aa)).

It belongs to the ABC-2 integral membrane protein family.

It localises to the cell inner membrane. Functionally, may form an ATP-driven capsule polysaccharide export apparatus, in association with the CtrB and CtrD proteins. This chain is Capsule polysaccharide export inner-membrane protein CtrC (ctrC), found in Neisseria meningitidis serogroup B (strain ATCC BAA-335 / MC58).